The chain runs to 183 residues: Adenine phosphoribosyltransferase (183 aa).

This sequence belongs to the purine/pyrimidine phosphoribosyltransferase family. Homodimer.

The protein localises to the cytoplasm. The catalysed reaction is AMP + diphosphate = 5-phospho-alpha-D-ribose 1-diphosphate + adenine. It functions in the pathway purine metabolism; AMP biosynthesis via salvage pathway; AMP from adenine: step 1/1. Catalyzes a salvage reaction resulting in the formation of AMP, that is energically less costly than de novo synthesis. This chain is Adenine phosphoribosyltransferase, found in Salmonella typhi.